The sequence spans 607 residues: Elongation factor 4 (607 aa).

The tr-type G domain occupies 11-193 (SKIRNFSIIA…QIVEKVPAPA (183 aa)). GTP-binding positions include 23-28 (DHGKST) and 140-143 (NKID).

It belongs to the TRAFAC class translation factor GTPase superfamily. Classic translation factor GTPase family. LepA subfamily.

It is found in the cell membrane. The catalysed reaction is GTP + H2O = GDP + phosphate + H(+). Functionally, required for accurate and efficient protein synthesis under certain stress conditions. May act as a fidelity factor of the translation reaction, by catalyzing a one-codon backward translocation of tRNAs on improperly translocated ribosomes. Back-translocation proceeds from a post-translocation (POST) complex to a pre-translocation (PRE) complex, thus giving elongation factor G a second chance to translocate the tRNAs correctly. Binds to ribosomes in a GTP-dependent manner. This Bacillus cereus (strain B4264) protein is Elongation factor 4.